Reading from the N-terminus, the 232-residue chain is Large ribosomal subunit protein uL1 (232 aa).

This sequence belongs to the universal ribosomal protein uL1 family. As to quaternary structure, part of the 50S ribosomal subunit.

Binds directly to 23S rRNA. The L1 stalk is quite mobile in the ribosome, and is involved in E site tRNA release. Its function is as follows. Protein L1 is also a translational repressor protein, it controls the translation of the L11 operon by binding to its mRNA. This is Large ribosomal subunit protein uL1 from Sinorhizobium fredii (strain NBRC 101917 / NGR234).